The chain runs to 99 residues: A-type ATP synthase subunit F (99 aa).

This sequence belongs to the V-ATPase F subunit family. Has multiple subunits with at least A(3), B(3), C, D, E, F, H, I and proteolipid K(x).

It is found in the cell membrane. In terms of biological role, component of the A-type ATP synthase that produces ATP from ADP in the presence of a proton gradient across the membrane. This chain is A-type ATP synthase subunit F, found in Methanococcus aeolicus (strain ATCC BAA-1280 / DSM 17508 / OCM 812 / Nankai-3).